The sequence spans 204 residues: E2 ubiquitin-conjugating enzyme PEX4 (204 aa).

Residues 2–196 form the UBC core domain; sequence SAEKRLLQEY…IEYYVGRYSI (195 aa). Catalysis depends on C133, which acts as the Glycyl thioester intermediate.

The protein belongs to the ubiquitin-conjugating enzyme family.

It localises to the peroxisome membrane. It carries out the reaction S-ubiquitinyl-[E1 ubiquitin-activating enzyme]-L-cysteine + [E2 ubiquitin-conjugating enzyme]-L-cysteine = [E1 ubiquitin-activating enzyme]-L-cysteine + S-ubiquitinyl-[E2 ubiquitin-conjugating enzyme]-L-cysteine.. It functions in the pathway protein modification; protein ubiquitination. Functionally, E2 ubiquitin-conjugating enzyme involved in peroxisome biosynthesis. Acts late in peroxisomal matrix protein import, after matrix protein translocation. Required for both monoubiquitination and polyubiquitination of coreceptor PEX20. polyubiquitination of PEX20 at conserved lysine 'Lys-19' near the N-terminus leads to its and proteasomal degradation, whereas a monoubiquitination at the conserved cysteine 'Cys-8' is essential for its recycling. This is E2 ubiquitin-conjugating enzyme PEX4 from Komagataella phaffii (strain GS115 / ATCC 20864) (Yeast).